We begin with the raw amino-acid sequence, 188 residues long: Pyridoxal 5'-phosphate synthase subunit PdxT (188 aa).

46–48 (GES) lines the L-glutamine pocket. The Nucleophile role is filled by cysteine 78. L-glutamine is bound by residues arginine 105 and 133 to 134 (IR). Catalysis depends on charge relay system residues histidine 169 and glutamate 171.

The protein belongs to the glutaminase PdxT/SNO family. In the presence of PdxS, forms a dodecamer of heterodimers. Only shows activity in the heterodimer.

The catalysed reaction is aldehydo-D-ribose 5-phosphate + D-glyceraldehyde 3-phosphate + L-glutamine = pyridoxal 5'-phosphate + L-glutamate + phosphate + 3 H2O + H(+). It carries out the reaction L-glutamine + H2O = L-glutamate + NH4(+). It functions in the pathway cofactor biosynthesis; pyridoxal 5'-phosphate biosynthesis. Its function is as follows. Catalyzes the hydrolysis of glutamine to glutamate and ammonia as part of the biosynthesis of pyridoxal 5'-phosphate. The resulting ammonia molecule is channeled to the active site of PdxS. The sequence is that of Pyridoxal 5'-phosphate synthase subunit PdxT from Thermosipho africanus (strain TCF52B).